A 356-amino-acid chain; its full sequence is Phosphoribosylformylglycinamidine cyclo-ligase (356 aa).

This sequence belongs to the AIR synthase family.

It is found in the cytoplasm. It catalyses the reaction 2-formamido-N(1)-(5-O-phospho-beta-D-ribosyl)acetamidine + ATP = 5-amino-1-(5-phospho-beta-D-ribosyl)imidazole + ADP + phosphate + H(+). It functions in the pathway purine metabolism; IMP biosynthesis via de novo pathway; 5-amino-1-(5-phospho-D-ribosyl)imidazole from N(2)-formyl-N(1)-(5-phospho-D-ribosyl)glycinamide: step 2/2. The chain is Phosphoribosylformylglycinamidine cyclo-ligase from Sinorhizobium medicae (strain WSM419) (Ensifer medicae).